The primary structure comprises 124 residues: Large ribosomal subunit protein uL18 (124 aa).

This sequence belongs to the universal ribosomal protein uL18 family. As to quaternary structure, part of the 50S ribosomal subunit; part of the 5S rRNA/L5/L18/L25 subcomplex. Contacts the 5S and 23S rRNAs.

This is one of the proteins that bind and probably mediate the attachment of the 5S RNA into the large ribosomal subunit, where it forms part of the central protuberance. The chain is Large ribosomal subunit protein uL18 from Orientia tsutsugamushi (strain Boryong) (Rickettsia tsutsugamushi).